The sequence spans 124 residues: Small ribosomal subunit protein uS11 (124 aa).

The protein belongs to the universal ribosomal protein uS11 family. As to quaternary structure, part of the 30S ribosomal subunit. Interacts with proteins S7 and S18. Binds to IF-3.

In terms of biological role, located on the platform of the 30S subunit, it bridges several disparate RNA helices of the 16S rRNA. Forms part of the Shine-Dalgarno cleft in the 70S ribosome. The sequence is that of Small ribosomal subunit protein uS11 from Anaplasma phagocytophilum (strain HZ).